We begin with the raw amino-acid sequence, 324 residues long: uncharacterized protein (324 aa).

8 consecutive transmembrane segments (helical) span residues 4-24, 63-83, 106-128, 132-151, 179-199, 209-229, 246-266, and 282-302; these read GNKV…PEFM, AALL…EGIL, ALFY…ISFL, WQVQ…SHLL, LADI…AVTL, GLDG…LVIM, LETA…LYTL, and GTWK…GWFM.

The protein belongs to the TerC family.

It localises to the cell membrane. This is an uncharacterized protein from Bacillus subtilis (strain 168).